A 429-amino-acid polypeptide reads, in one-letter code: Adenylosuccinate synthetase (429 aa).

Residues 12–18 (GDEGKGK) and 40–42 (GHT) contribute to the GTP site. The Proton acceptor role is filled by D13. Mg(2+) is bound by residues D13 and G40. Residues 13 to 16 (DEGK), 38 to 41 (NAGH), T129, R143, Q223, T238, and R302 contribute to the IMP site. The active-site Proton donor is H41. Position 298 to 304 (298 to 304 (VVTGRKR)) interacts with substrate. GTP contacts are provided by residues R304, 330-332 (KLD), and 412-414 (STS).

This sequence belongs to the adenylosuccinate synthetase family. In terms of assembly, homodimer. Requires Mg(2+) as cofactor.

It localises to the cytoplasm. It catalyses the reaction IMP + L-aspartate + GTP = N(6)-(1,2-dicarboxyethyl)-AMP + GDP + phosphate + 2 H(+). It functions in the pathway purine metabolism; AMP biosynthesis via de novo pathway; AMP from IMP: step 1/2. Its function is as follows. Plays an important role in the de novo pathway of purine nucleotide biosynthesis. Catalyzes the first committed step in the biosynthesis of AMP from IMP. In Bartonella henselae (strain ATCC 49882 / DSM 28221 / CCUG 30454 / Houston 1) (Rochalimaea henselae), this protein is Adenylosuccinate synthetase.